The sequence spans 77 residues: Acyl carrier protein homolog (77 aa).

The 76-residue stretch at 1–76 (MSINIKDLIM…DLINAFEDVL (76 aa)) folds into the Carrier domain. Ser36 bears the O-(pantetheine 4'-phosphoryl)serine mark.

4'-phosphopantetheine is transferred from CoA to a specific serine of the apo-ACP-like protein.

It functions in the pathway lipid metabolism; fatty acid biosynthesis. Its function is as follows. Carrier of the growing fatty acid chain in fatty acid biosynthesis. The chain is Acyl carrier protein homolog from Ureaplasma parvum serovar 3 (strain ATCC 700970).